The chain runs to 308 residues: 1D-myo-inositol 2-acetamido-2-deoxy-alpha-D-glucopyranoside deacetylase (308 aa).

Zn(2+) is bound by residues histidine 18, aspartate 21, and histidine 153.

The protein belongs to the MshB deacetylase family. Zn(2+) is required as a cofactor.

It carries out the reaction 1D-myo-inositol 2-acetamido-2-deoxy-alpha-D-glucopyranoside + H2O = 1D-myo-inositol 2-amino-2-deoxy-alpha-D-glucopyranoside + acetate. Its function is as follows. Catalyzes the deacetylation of 1D-myo-inositol 2-acetamido-2-deoxy-alpha-D-glucopyranoside (GlcNAc-Ins) in the mycothiol biosynthesis pathway. The protein is 1D-myo-inositol 2-acetamido-2-deoxy-alpha-D-glucopyranoside deacetylase of Salinispora arenicola (strain CNS-205).